Reading from the N-terminus, the 131-residue chain is uncharacterized protein (131 aa).

In terms of domain architecture, MSP spans 14–130 (FLLIYSSLEV…RRLPASFLST (117 aa)).

This is an uncharacterized protein from Caenorhabditis elegans.